The primary structure comprises 300 residues: Hydroxyquinol 1,2-dioxygenase (300 aa).

Residues tyrosine 167, tyrosine 200, histidine 224, and histidine 226 each coordinate Fe cation.

It belongs to the intradiol ring-cleavage dioxygenase family. Fe(3+) serves as cofactor.

The catalysed reaction is benzene-1,2,4-triol + O2 = maleylacetate + 2 H(+). It participates in aromatic compound metabolism. The protein operates within xenobiotic degradation. Involved in the degradation of para-nitrophenol (4-NP). Catalyzes the conversion of hydroxyquinol to malelylacetate. This Rhodococcus opacus (Nocardia opaca) protein is Hydroxyquinol 1,2-dioxygenase (npcC).